Reading from the N-terminus, the 228-residue chain is HTH-type transcriptional regulator ArcR (228 aa).

22 to 141 (SYINIPVGVL…VKLFSLLSET (120 aa)) serves as a coordination point for a nucleoside 3',5'-cyclic phosphate. The HTH crp-type domain occupies 155–228 (KLAKERVTKI…SKNWLVSKDL (74 aa)). The segment at residues 188–207 (IQLLSDMAGISRETTSHIIN) is a DNA-binding region (H-T-H motif).

The protein localises to the cytoplasm. Functionally, positively regulates the expression of the arcABDCR operon under anaerobic conditions, thus playing an essential role in arginine catabolism. May also control the expression of genes encoding proteins which are involved in anaerobic metabolism. Can bind cyclic AMP. The sequence is that of HTH-type transcriptional regulator ArcR (arcR) from Staphylococcus epidermidis (strain ATCC 35984 / DSM 28319 / BCRC 17069 / CCUG 31568 / BM 3577 / RP62A).